The primary structure comprises 642 residues: Bud site selection protein 5 (642 aa).

Residues 224-339 enclose the N-terminal Ras-GEF domain; the sequence is EVFRIQLYLN…DIVQLFINKK (116 aa). The 229-residue stretch at 412-640 folds into the Ras-GEF domain; sequence SPWSLAKTLT…YQVSIAKVPR (229 aa).

In terms of assembly, interacts with AXL2, BEM1, GSP1 and in haploid cells with AXL1.

It localises to the bud neck. The protein resides in the cytoplasm. It is found in the cell cortex. Its function is as follows. GDP-GTP exchange factor (GEF) for the small GTPase BUD1/RSR1. Regulates the activity of BUD1 together with BUD2 which is a GTPase-activating protein (GAP) of BUD1. Required to produce both the axial and bipolar patterns of bud site selection. Determines the orientation of division axis. Overexpression can suppress mutations in PRP20 which is the GEF for GSP1. May be a cytoplasmic GEF for GSP1. Might also act on the Ras-like protein CDC42. Appears to bind to Ras proteins but not to activate them. The chain is Bud site selection protein 5 (BUD5) from Saccharomyces cerevisiae (strain ATCC 204508 / S288c) (Baker's yeast).